Here is a 102-residue protein sequence, read N- to C-terminus: Small ribosomal subunit protein uS14 (102 aa).

It belongs to the universal ribosomal protein uS14 family. As to quaternary structure, part of the 30S ribosomal subunit. Contacts proteins S3 and S10.

Its function is as follows. Binds 16S rRNA, required for the assembly of 30S particles and may also be responsible for determining the conformation of the 16S rRNA at the A site. The sequence is that of Small ribosomal subunit protein uS14 from Ehrlichia ruminantium (strain Gardel).